Reading from the N-terminus, the 323-residue chain is Ankyrin repeat and SOCS box protein 11 (323 aa).

ANK repeat units follow at residues Ala64–Leu93, Asn97–Gly126, His130–Leu159, His162–His191, Gln195–His224, and Trp227–Arg256. Residues Ser273–Gln323 form the SOCS box domain.

It belongs to the ankyrin SOCS box (ASB) family. In terms of assembly, substrate-recognition component of the ECS(ASB11) complex, composed of ASB11, CUL5, ELOB, ELOC and RNF7/RBX2.

Its subcellular location is the endoplasmic reticulum. It functions in the pathway protein modification; protein ubiquitination. In terms of biological role, substrate-recognition component of a cullin-5-RING E3 ubiquitin-protein ligase complex (ECS complex, also named CRL5 complex), which mediates the ubiquitination and subsequent proteasomal degradation of target proteins, such as BIK, DIRAS2 and RPN1. The ECS(ASB11) complex acts as a regulator of the endoplasmic reticulum unfolded protein response by mediating ubiquitination and degradation of BIK. The sequence is that of Ankyrin repeat and SOCS box protein 11 from Homo sapiens (Human).